A 191-amino-acid chain; its full sequence is Putative 3-methyladenine DNA glycosylase (191 aa).

This sequence belongs to the DNA glycosylase MPG family.

This Carboxydothermus hydrogenoformans (strain ATCC BAA-161 / DSM 6008 / Z-2901) protein is Putative 3-methyladenine DNA glycosylase.